A 389-amino-acid chain; its full sequence is Sterol methyltransferase-like 2 (389 aa).

The helical transmembrane segment at 25-45 threads the bilayer; the sequence is LSWKGAVGLVAATGIGYVLII.

Belongs to the class I-like SAM-binding methyltransferase superfamily. Erg6/SMT family.

It localises to the microsome membrane. Functionally, unable to convert squalene, botryococcene, cycloartenol, zymosterol or lanosterol to mono-, di-, tri- or tetramethylated derivatives. The chain is Sterol methyltransferase-like 2 (SMT-2) from Botryococcus braunii (Green alga).